Reading from the N-terminus, the 386-residue chain is Leupaxin (386 aa).

At Met-1 the chain carries N-acetylmethionine. The LD motif 1 motif lies at 3 to 15; the sequence is ELDALLEELERST. Residues 13-41 are disordered; the sequence is RSTLQDSDEYSNPAPLPLDQHSRKETNLD. Residue Ser-19 is modified to Phosphoserine. Tyr-22 bears the Phosphotyrosine mark. At Ser-54 the chain carries Phosphoserine. Residue Tyr-62 is modified to Phosphotyrosine. 2 short sequence motifs (LD motif) span residues 70-82 and 92-103; these read NVYSEAQEPKESP and QLDELMAHLTEM. Residue Tyr-72 is modified to Phosphotyrosine; by LYN. Ser-81 is subject to Phosphoserine. 4 LIM zinc-binding domains span residues 150 to 208, 209 to 267, 268 to 326, and 327 to 386; these read GHCA…QLFS, PRCA…AMFS, PKCG…HRRG, and TLCH…LFPL.

Belongs to the paxillin family. As to quaternary structure, interacts with PTPN22. Interacts with unphosphorylated ITGA4. Interacts with PTK2B/PYK2, PTPN12, AR and SRF. Interacts (via LD motif 3) with LYN and the interaction is induced upon B-cell antigen receptor (BCR) activation. Interacts (via LD motif 3) with PTK2/FAK. Post-translationally, phosphorylated on tyrosine residues. Phosphorylation on Tyr-72 is important for its inhibitory function. Bombesin stimulates phosphorylation on Tyr-22, Tyr-62 and Tyr-72. Macrophages, monocytes and osteoclasts (at protein level). Strongly expressed in cells and tissues of hematopoietic origin. Highest expression in lymphoid tissues such as spleen, lymph node, thymus and appendix and in the vascular smooth muscle. Lower levels in bone marrow and fetal liver. Also expressed in peripheral blood lymphocytes and a number of hematopoietic cell lines. Very low levels found in epithelial cell lines. Expressed in prostate cancer (PCa) cells and its expression intensity is directly linked to PCa progression.

It is found in the cytoplasm. The protein resides in the cell junction. The protein localises to the focal adhesion. It localises to the nucleus. Its subcellular location is the perinuclear region. It is found in the cell projection. The protein resides in the podosome. The protein localises to the cell membrane. In terms of biological role, transcriptional coactivator for androgen receptor (AR) and serum response factor (SRF). Contributes to the regulation of cell adhesion, spreading and cell migration and acts as a negative regulator in integrin-mediated cell adhesion events. Suppresses the integrin-induced tyrosine phosphorylation of paxillin (PXN). May play a critical role as an adapter protein in the formation of the adhesion zone in osteoclasts. Negatively regulates B-cell antigen receptor (BCR) signaling. The chain is Leupaxin (LPXN) from Homo sapiens (Human).